Consider the following 733-residue polypeptide: Fibronectin type III domain-containing protein 7 (733 aa).

The N-terminal stretch at 1-25 is a signal peptide; the sequence is MAGGRETCLPLIGFILICLKMVASA. Fibronectin type-III domains follow at residues 28–115, 116–202, 203–288, 289–373, 374–459, 460–544, 545–632, and 631–715; these read APEI…TVLA, APIL…TSPR, APAN…TVAC, APGR…TAPC, CPSD…TAPC, SPEI…TVPC, CPTG…CCPL, and PLGV…YSVT. Residue Asn230 is glycosylated (N-linked (GlcNAc...) asparagine). Asn433 carries N-linked (GlcNAc...) asparagine glycosylation.

It localises to the secreted. This is Fibronectin type III domain-containing protein 7 (FNDC7) from Homo sapiens (Human).